We begin with the raw amino-acid sequence, 216 residues long: Phosphoenolpyruvate guanylyltransferase (216 aa).

Residues T143, G159, and S162 each coordinate phosphoenolpyruvate.

The protein belongs to the CofC family.

The catalysed reaction is phosphoenolpyruvate + GTP + H(+) = enolpyruvoyl-2-diphospho-5'-guanosine + diphosphate. It functions in the pathway cofactor biosynthesis; coenzyme F420 biosynthesis. Its function is as follows. Guanylyltransferase that catalyzes the activation of phosphoenolpyruvate (PEP) as enolpyruvoyl-2-diphospho-5'-guanosine, via the condensation of PEP with GTP. It is involved in the biosynthesis of coenzyme F420, a hydride carrier cofactor. This is Phosphoenolpyruvate guanylyltransferase from Streptomyces scabiei (strain 87.22).